A 341-amino-acid chain; its full sequence is Putative [LysW]-lysine/[LysW]-ornithine hydrolase (341 aa).

His62 is a binding site for Zn(2+). Residue Asp64 is part of the active site. Zn(2+) is bound at residue Asp86. Residue Glu115 is the Proton acceptor of the active site. Positions 116, 140, and 309 each coordinate Zn(2+).

It belongs to the peptidase M20A family. LysK subfamily. The cofactor is Zn(2+). Co(2+) is required as a cofactor.

Its subcellular location is the cytoplasm. It catalyses the reaction [amino-group carrier protein]-C-terminal-gamma-(L-lysyl)-L-glutamate + H2O = [amino-group carrier protein]-C-terminal-L-glutamate + L-lysine. The enzyme catalyses [amino-group carrier protein]-C-terminal-gamma-(L-ornithyl)-L-glutamate + H2O = [amino-group carrier protein]-C-terminal-L-glutamate + L-ornithine. Its pathway is amino-acid biosynthesis; L-lysine biosynthesis via AAA pathway; L-lysine from L-alpha-aminoadipate (Thermus route): step 5/5. It functions in the pathway amino-acid biosynthesis; L-arginine biosynthesis. Catalyzes the release of L-lysine from [LysW]-gamma-L-lysine and the release of L-ornithine from [LysW]-L-ornithine. The chain is Putative [LysW]-lysine/[LysW]-ornithine hydrolase from Pyrobaculum aerophilum (strain ATCC 51768 / DSM 7523 / JCM 9630 / CIP 104966 / NBRC 100827 / IM2).